Here is a 72-residue protein sequence, read N- to C-terminus: Gas vesicle protein A (72 aa).

This sequence belongs to the gas vesicle GvpA family. The gas vesicle shell is 2 nm thick and consists of a single layer of this protein. It forms helical ribs nearly perpendicular to the long axis of the vesicle.

Its subcellular location is the gas vesicle shell. Gas vesicles are hollow, gas filled proteinaceous nanostructures found in some microorganisms. During planktonic growth they allow positioning of the organism at a favorable depth for light or nutrient acquisition. GvpA forms the protein shell. This Synechococcus sp. (strain JA-3-3Ab) (Cyanobacteria bacterium Yellowstone A-Prime) protein is Gas vesicle protein A.